Here is a 398-residue protein sequence, read N- to C-terminus: Putative defective protein IntQ (398 aa).

In terms of domain architecture, Core-binding (CB) spans 51–146 (LTIKELAEKF…NLNAVFQFGV (96 aa)). The Tyr recombinase domain occupies 167–378 (TIPDPLSREE…SENNNAQVAL (212 aa)). Residues arginine 202, lysine 236, arginine 331, and histidine 354 contribute to the active site. Tyrosine 364 functions as the O-(3'-phospho-DNA)-tyrosine intermediate in the catalytic mechanism.

The protein belongs to the 'phage' integrase family.

Integrase is necessary for integration of the phage into the host genome by site-specific recombination. In conjunction with excisionase, integrase is also necessary for excision of the prophage from the host genome. The polypeptide is Putative defective protein IntQ (intQ) (Escherichia coli (strain K12)).